A 368-amino-acid polypeptide reads, in one-letter code: 1-deoxy-D-xylulose 5-phosphate reductoisomerase (368 aa).

Positions 9, 10, 11, 12, 35, and 106 each coordinate NADPH. Position 107 (Lys-107) interacts with 1-deoxy-D-xylulose 5-phosphate. Glu-108 is a binding site for NADPH. A Mn(2+)-binding site is contributed by Asp-132. Ser-133, Glu-134, Ser-158, and His-181 together coordinate 1-deoxy-D-xylulose 5-phosphate. Position 134 (Glu-134) interacts with Mn(2+). NADPH is bound at residue Gly-187. Residues Ser-194, Asn-199, Lys-200, and Glu-203 each contribute to the 1-deoxy-D-xylulose 5-phosphate site. Residue Glu-203 coordinates Mn(2+).

This sequence belongs to the DXR family. It depends on Mg(2+) as a cofactor. Requires Mn(2+) as cofactor.

The catalysed reaction is 2-C-methyl-D-erythritol 4-phosphate + NADP(+) = 1-deoxy-D-xylulose 5-phosphate + NADPH + H(+). It participates in isoprenoid biosynthesis; isopentenyl diphosphate biosynthesis via DXP pathway; isopentenyl diphosphate from 1-deoxy-D-xylulose 5-phosphate: step 1/6. Functionally, catalyzes the NADPH-dependent rearrangement and reduction of 1-deoxy-D-xylulose-5-phosphate (DXP) to 2-C-methyl-D-erythritol 4-phosphate (MEP). The protein is 1-deoxy-D-xylulose 5-phosphate reductoisomerase of Mycoplasmoides gallisepticum (strain R(low / passage 15 / clone 2)) (Mycoplasma gallisepticum).